The primary structure comprises 257 residues: Acyl-[acyl-carrier-protein]--UDP-N-acetylglucosamine O-acyltransferase (257 aa).

The protein belongs to the transferase hexapeptide repeat family. LpxA subfamily. Homotrimer.

The protein localises to the cytoplasm. The enzyme catalyses a (3R)-hydroxyacyl-[ACP] + UDP-N-acetyl-alpha-D-glucosamine = a UDP-3-O-[(3R)-3-hydroxyacyl]-N-acetyl-alpha-D-glucosamine + holo-[ACP]. It participates in glycolipid biosynthesis; lipid IV(A) biosynthesis; lipid IV(A) from (3R)-3-hydroxytetradecanoyl-[acyl-carrier-protein] and UDP-N-acetyl-alpha-D-glucosamine: step 1/6. Functionally, involved in the biosynthesis of lipid A, a phosphorylated glycolipid that anchors the lipopolysaccharide to the outer membrane of the cell. The sequence is that of Acyl-[acyl-carrier-protein]--UDP-N-acetylglucosamine O-acyltransferase from Anaeromyxobacter dehalogenans (strain 2CP-1 / ATCC BAA-258).